The following is a 235-amino-acid chain: Phosphoribosylaminoimidazole-succinocarboxamide synthase (235 aa).

It belongs to the SAICAR synthetase family.

The enzyme catalyses 5-amino-1-(5-phospho-D-ribosyl)imidazole-4-carboxylate + L-aspartate + ATP = (2S)-2-[5-amino-1-(5-phospho-beta-D-ribosyl)imidazole-4-carboxamido]succinate + ADP + phosphate + 2 H(+). Its pathway is purine metabolism; IMP biosynthesis via de novo pathway; 5-amino-1-(5-phospho-D-ribosyl)imidazole-4-carboxamide from 5-amino-1-(5-phospho-D-ribosyl)imidazole-4-carboxylate: step 1/2. In Streptococcus thermophilus (strain ATCC BAA-250 / LMG 18311), this protein is Phosphoribosylaminoimidazole-succinocarboxamide synthase.